The chain runs to 280 residues: Ribosomal RNA small subunit methyltransferase A (280 aa).

S-adenosyl-L-methionine contacts are provided by Asn-28, Leu-30, Gly-55, Glu-77, Asp-103, and Asn-122.

This sequence belongs to the class I-like SAM-binding methyltransferase superfamily. rRNA adenine N(6)-methyltransferase family. RsmA subfamily.

It is found in the cytoplasm. It carries out the reaction adenosine(1518)/adenosine(1519) in 16S rRNA + 4 S-adenosyl-L-methionine = N(6)-dimethyladenosine(1518)/N(6)-dimethyladenosine(1519) in 16S rRNA + 4 S-adenosyl-L-homocysteine + 4 H(+). In terms of biological role, specifically dimethylates two adjacent adenosines (A1518 and A1519) in the loop of a conserved hairpin near the 3'-end of 16S rRNA in the 30S particle. May play a critical role in biogenesis of 30S subunits. In Ruegeria sp. (strain TM1040) (Silicibacter sp.), this protein is Ribosomal RNA small subunit methyltransferase A.